The following is a 930-amino-acid chain: RNA-binding protein 10 (930 aa).

2 stretches are compositionally biased toward basic and acidic residues: residues 1–14 (MEYE…DRTG) and 21–45 (RSQD…RSYP). Residues 1-127 (MEYERRGGRG…EEDEEEEEKA (127 aa)) form a disordered region. Glu-2 is subject to N-acetylserine. Phosphoserine is present on residues Arg-30, Ser-61, and Ser-89. The segment covering 59 to 70 (DSSEEQSAEDSY) has biased composition (acidic residues). Basic residues predominate over residues 80-89 (RRRRRRHRHS). Residues 98–111 (RDGDYRDQDYRTEQ) are compositionally biased toward basic and acidic residues. Positions 112–125 (GEEEEEEEDEEEEE) are enriched in acidic residues. The 81-residue stretch at 129–209 (NIVMLRMLPQ…QKVSMHYSDP (81 aa)) folds into the RRM 1 domain. The segment at 212–242 (KINEDWLCNKCGVQNFKRREKCFKCGVPKSE) adopts a RanBP2-type zinc-finger fold. The 85-residue stretch at 300-384 (DTIILRNLNP…KTINVEFAKG (85 aa)) folds into the RRM 2 domain. Residue Lys-383 is modified to N6-acetyllysine. Disordered stretches follow at residues 466-524 (PGIT…AANS), 537-569 (SELQ…VPDV), 620-685 (EQSA…DERR), and 700-753 (KGAL…EEKL). Polar residues predominate over residues 508 to 524 (YQQSAEASSSQGTAANS). Positions 541–557 (SPTHPSSALPPATSPTA) are enriched in low complexity. 3 stretches are compositionally biased toward basic and acidic residues: residues 623 to 639 (ADGH…GKEK), 653 to 669 (KDME…KENF), and 700 to 709 (KGALAERQHT). Residues Ser-718, Ser-723, Ser-733, Ser-736, and Ser-738 each carry the phosphoserine modification. Positions 743–753 (ERGGPEREEKL) are enriched in basic and acidic residues. The C2H2-type; atypical zinc finger occupies 759–784 (LACLLCRRQFPSKEALIRHQQLSGLH). 2 positions are modified to phosphoserine: Ser-781 and Ser-797. Over residues 815–826 (RDRAAERREKYG) the composition is skewed to basic and acidic residues. Residues 815-861 (RDRAAERREKYGIPEPPEPKRRKYGGISTASVDFEQPTRDGLGSDNI) are disordered. Ser-845 bears the Phosphoserine mark. Positions 858-904 (SDNIGSRMLQAMGWKEGSGLGRKKQGIVTPIEAQTRVRGSGLGARGS) constitute a G-patch domain. Arg-902 is modified (omega-N-methylarginine).

In terms of assembly, associates with the spliceosome. Component of a large chromatin remodeling complex, at least composed of MYSM1, PCAF, RBM10 and KIF11/TRIP5.

The protein localises to the nucleus. Its function is as follows. Binds to ssRNA containing the consensus sequence 5'-AGGUAA-3'. May be involved in post-transcriptional processing, most probably in mRNA splicing. Binds to RNA homopolymers, with a preference for poly(G) and poly(U) and little for poly(A). May bind to specific miRNA hairpins. This is RNA-binding protein 10 from Homo sapiens (Human).